We begin with the raw amino-acid sequence, 389 residues long: 26S proteasome non-ATPase regulatory subunit 6 (389 aa).

The PCI domain maps to 193–361; sequence DFKQAAELFL…EIVETNRPDS (169 aa).

This sequence belongs to the proteasome subunit S10 family. As to quaternary structure, component of the 19S proteasome regulatory particle complex. The 26S proteasome consists of a 20S core particle (CP) and two 19S regulatory subunits (RP). The regulatory particle is made of a lid composed of 9 subunits including PSMD6, a base containing 6 ATPases and few additional components.

Component of the 26S proteasome, a multiprotein complex involved in the ATP-dependent degradation of ubiquitinated proteins. This complex plays a key role in the maintenance of protein homeostasis by removing misfolded or damaged proteins, which could impair cellular functions, and by removing proteins whose functions are no longer required. Therefore, the proteasome participates in numerous cellular processes, including cell cycle progression, apoptosis, or DNA damage repair. This chain is 26S proteasome non-ATPase regulatory subunit 6 (Psmd6), found in Mus musculus (Mouse).